The sequence spans 727 residues: MRPLLLLAPLGWLLLAEAKGDAKPEDNLLVLTVATKETEGFRRFKRSAQFFNYKIQALGLGEDWNVEKGTSAGGGQKVRLLKKALEKHADKEDLVILFTDSYDVLFASGPRELLKKFRQARSQVVFSAEELIYPDRRLETKYPVVSDGKRFLGSGGFIGYAPNLSKLVAEWEGQDSDSDQLFYTRIFLDPEKREQINITLDHRCRIFQNLDGALDEVVLKFEMGHVRARNLAYDTLPVLIHGNGPTKLQLNYLGNYIPRFWTFETGCTVCDEGLRSLKGIGDEALPTVLVGVFIEQPTPFVSLFFQRLLRLHYPQKHMRLFIHNHEQHHKAQVEEFLAEHGSEYQSVKLVGPEVRMANADARNMGADLCRQDRSCTYYFSVDADVALTEPSSLRLLIQQNKNVIAPLMTRHGRLWSNFWGALSADGYYARSEDYVDIVQGRRVGVWNVPYISNIYLIKGSALRGELQSPDLFHHSKLDPDMAFCANVRQQDVFMFLTNRHTLGHLLSLDSYRTTHLHNDLWEVFSNPEDWKEKYIHQNYTKALAGKLVETPCPDVYWFPIFTEVACDELVEEMEHFGQWSLGDNKDNRIQGGYENVPTIDIHMNQIGFEREWHKFLLEYIAPMTEKLYPGYYTRAQFDLAFVVRYKPDEQPSLMPHHDASTFTINIALNRVGVDYEGGGCRFLRYNCSIRAPRKGWTLMHPGRLTHYHEGLPTTRGTRYIAVSFVDP.

An N-terminal signal peptide occupies residues Met1–Ala18. N-linked (GlcNAc...) asparagine glycosylation is found at Asn163, Asn197, and Asn538. The Fe2OG dioxygenase domain occupies Gln636–Pro727. 2 residues coordinate Fe cation: His656 and Asp658. N-linked (GlcNAc...) asparagine glycosylation is present at Asn686. His708 lines the Fe cation pocket. Residue Arg718 is part of the active site.

As to quaternary structure, homodimer. Identified in a complex with P3H3 and P3H4. Fe(2+) is required as a cofactor. L-ascorbate serves as cofactor.

Its subcellular location is the rough endoplasmic reticulum membrane. It catalyses the reaction L-lysyl-[collagen] + 2-oxoglutarate + O2 = (5R)-5-hydroxy-L-lysyl-[collagen] + succinate + CO2. In terms of biological role, part of a complex composed of PLOD1, P3H3 and P3H4 that catalyzes hydroxylation of lysine residues in collagen alpha chains and is required for normal assembly and cross-linkling of collagen fibrils. Forms hydroxylysine residues in -Xaa-Lys-Gly- sequences in collagens. These hydroxylysines serve as sites of attachment for carbohydrate units and are essential for the stability of the intermolecular collagen cross-links. The protein is Procollagen-lysine,2-oxoglutarate 5-dioxygenase 1 (PLOD1) of Pongo abelii (Sumatran orangutan).